Consider the following 439-residue polypeptide: Cell division protein FtsA (439 aa).

Belongs to the FtsA/MreB family. In terms of assembly, self-interacts. Interacts with FtsZ.

It localises to the cell inner membrane. In terms of biological role, cell division protein that is involved in the assembly of the Z ring. May serve as a membrane anchor for the Z ring. This Shigella flexneri protein is Cell division protein FtsA.